Here is a 1371-residue protein sequence, read N- to C-terminus: Serine protease pic autotransporter (1371 aa).

A signal peptide spans Met-1–Ala-55. One can recognise a Peptidase S6 domain in the interval Gly-56 to Gln-301. Catalysis depends on charge relay system residues His-127, Asp-155, and Ser-258. Residues Asp-1105 to Phe-1371 enclose the Autotransporter domain.

Cleaved to release the mature protein from the outer membrane.

It is found in the periplasm. Its subcellular location is the secreted. It localises to the cell surface. The protein resides in the cell outer membrane. In terms of biological role, involved in virulence of uropathogenic E.coli although it is not known how it contributes to it. Has no mucinase activity. This chain is Serine protease pic autotransporter (pic), found in Escherichia coli O6:H1 (strain CFT073 / ATCC 700928 / UPEC).